The chain runs to 308 residues: HPr kinase/phosphorylase (308 aa).

Residues histidine 138 and lysine 159 contribute to the active site. 153–160 lines the ATP pocket; sequence GESGLGKS. Serine 160 provides a ligand contact to Mg(2+). Aspartate 177 serves as the catalytic Proton acceptor; for phosphorylation activity. Proton donor; for dephosphorylation activity. The tract at residues 201 to 210 is important for the catalytic mechanism of both phosphorylation and dephosphorylation; the sequence is LEVRGLGLLD. Glutamate 202 is a binding site for Mg(2+). Arginine 243 is a catalytic residue. The important for the catalytic mechanism of dephosphorylation stretch occupies residues 264–269; that stretch reads QVAAGR.

Belongs to the HPrK/P family. As to quaternary structure, homohexamer. Mg(2+) serves as cofactor.

It carries out the reaction [HPr protein]-L-serine + ATP = [HPr protein]-O-phospho-L-serine + ADP + H(+). The enzyme catalyses [HPr protein]-O-phospho-L-serine + phosphate + H(+) = [HPr protein]-L-serine + diphosphate. Catalyzes the ATP- as well as the pyrophosphate-dependent phosphorylation of a specific serine residue in HPr, a phosphocarrier protein of the phosphoenolpyruvate-dependent sugar phosphotransferase system (PTS). HprK/P also catalyzes the pyrophosphate-producing, inorganic phosphate-dependent dephosphorylation (phosphorolysis) of seryl-phosphorylated HPr (P-Ser-HPr). The sequence is that of HPr kinase/phosphorylase from Bordetella bronchiseptica (strain ATCC BAA-588 / NCTC 13252 / RB50) (Alcaligenes bronchisepticus).